A 500-amino-acid polypeptide reads, in one-letter code: Raftlin-2 (500 aa).

G2 carries N-myristoyl glycine lipidation. Residue C3 is the site of S-palmitoyl cysteine attachment. Positions 203–236 (GHLSESGVEEEPQHESGQHQTERNSSPSYANPKR) are disordered. A compositionally biased stretch (basic and acidic residues) spans 213-224 (EPQHESGQHQTE). S404 carries the post-translational modification Phosphoserine. Positions 406–500 (AQTPERKGSR…EEGVTQVTCM (95 aa)) are disordered. Position 408 is a phosphothreonine (T408). Basic and acidic residues predominate over residues 409–424 (PERKGSRLLKGEDRNK). Over residues 426–438 (SSRSLGLDTNASQ) the composition is skewed to polar residues. Position 429 is a phosphoserine (S429). Residues 467 to 478 (SDSFSGFSSSDS) are compositionally biased toward low complexity.

The protein belongs to the raftlin family. Expressed in B-cells, heart, brain, spleen, large intestine and lung. Expressed in dendritic cells and macrophages.

The protein resides in the cell membrane. Functionally, upon bacterial lipopolysaccharide stimulation, mediates clathrin-dependent internalization of TLR4 in dendritic cells, resulting in activation of TICAM1-mediated signaling and subsequent IFNB1 production. May regulate B-cell antigen receptor-mediated signaling. This is Raftlin-2 (Rftn2) from Mus musculus (Mouse).